The chain runs to 68 residues: Large ribosomal subunit protein bL35 (68 aa).

This sequence belongs to the bacterial ribosomal protein bL35 family.

The chain is Large ribosomal subunit protein bL35 from Rickettsia felis (strain ATCC VR-1525 / URRWXCal2) (Rickettsia azadi).